The primary structure comprises 923 residues: Protein prickle (923 aa).

The tract at residues 1–196 (MSYPYQKSHH…HPFHSPASAA (196 aa)) is disordered. A compositionally biased stretch (low complexity) spans 11–34 (QTQQPQQNGHPQHQLMLQQQQQAD). Basic residues predominate over residues 37–49 (PHHHHHHHVHHAT). Composition is skewed to low complexity over residues 59-73 (RSPL…LYSG) and 106-118 (MPGM…PPGM). Over residues 122 to 134 (LGGGGGGGGGGSA) the composition is skewed to gly residues. 2 stretches are compositionally biased toward low complexity: residues 152–169 (STVT…SARS) and 184–196 (SSHH…ASAA). The 109-residue stretch at 275–383 (GGGHNYSQSD…TVKQITTTLI (109 aa)) folds into the PET domain. LIM zinc-binding domains lie at 382-446 (LICE…ETLK), 447-507 (PRCS…MFAE), and 508-570 (YCDY…GEPP). 2 disordered regions span residues 571 to 668 (TPSD…LDLT) and 703 to 867 (GPIA…SSAD). The segment covering 709-718 (NGNGPTGGGP) has biased composition (gly residues). A compositionally biased stretch (polar residues) spans 738-748 (ESPSFSGTNSP). Over residues 777–786 (HSIKEVRFEG) the composition is skewed to basic and acidic residues. A compositionally biased stretch (polar residues) spans 792–805 (LPRTKSYCQRNGGQ). A compositionally biased stretch (acidic residues) spans 817–827 (SDDDELAEDET). A compositionally biased stretch (basic and acidic residues) spans 840-852 (QREQQRPVDDSDA). A compositionally biased stretch (low complexity) spans 853-865 (RSVCSTCSSSSSS).

It belongs to the prickle / espinas / testin family. In terms of assembly, interacts with dsh; PET and LIM domains interact with dsh DEP domain, in wing cells. Interacts with Vang in photoreceptor cells.

It is found in the cell membrane. Its function is as follows. Acts in a planar cell polarity (PCP) complex; polarization along the apical/basal axis of epithelial cells. PCP signaling in the wing disk requires the receptor fz and the cytoplasmic proteins dsh and pk. These act in a feedback loop leading to activation of the jnk cascade and subsequent polarized arrangement of hairs and bristles. Dgo and pk compete with one another for dsh binding, thereby modulating fz dsh activity and ensuring tight control over fz PCP signaling. Vang, stan and pk function together to regulate the establishment of tissue polarity in the adult eye. The polypeptide is Protein prickle (Anopheles gambiae (African malaria mosquito)).